The chain runs to 200 residues: Recombination protein RecR (200 aa).

The C4-type zinc-finger motif lies at 57–72 (CSHCRTFTENERCEIC). The 96-residue stretch at 81–176 (GLLCVVESPA…KVSRIAHGVP (96 aa)) folds into the Toprim domain.

The protein belongs to the RecR family.

Functionally, may play a role in DNA repair. It seems to be involved in an RecBC-independent recombinational process of DNA repair. It may act with RecF and RecO. In Aeromonas hydrophila subsp. hydrophila (strain ATCC 7966 / DSM 30187 / BCRC 13018 / CCUG 14551 / JCM 1027 / KCTC 2358 / NCIMB 9240 / NCTC 8049), this protein is Recombination protein RecR.